Consider the following 132-residue polypeptide: MDDARLFRRVVCMPFPMIMLVALYRNVLGRDSTVDCSFDVILTPWIMASMFSKRMVNWSNPRQAVLKVCSAAVTSRIVANWLFTMNILYTSGEKGFYSLATAVVIKTVTDGFTVIRVFSIHLNESVYSKPLP.

This is an uncharacterized protein from Saccharomyces cerevisiae (strain ATCC 204508 / S288c) (Baker's yeast).